A 343-amino-acid polypeptide reads, in one-letter code: UDP-3-O-acylglucosamine N-acyltransferase (343 aa).

The active-site Proton acceptor is the histidine 245.

This sequence belongs to the transferase hexapeptide repeat family. LpxD subfamily. Homotrimer.

It catalyses the reaction a UDP-3-O-[(3R)-3-hydroxyacyl]-alpha-D-glucosamine + a (3R)-hydroxyacyl-[ACP] = a UDP-2-N,3-O-bis[(3R)-3-hydroxyacyl]-alpha-D-glucosamine + holo-[ACP] + H(+). It participates in bacterial outer membrane biogenesis; LPS lipid A biosynthesis. Catalyzes the N-acylation of UDP-3-O-acylglucosamine using 3-hydroxyacyl-ACP as the acyl donor. Is involved in the biosynthesis of lipid A, a phosphorylated glycolipid that anchors the lipopolysaccharide to the outer membrane of the cell. The polypeptide is UDP-3-O-acylglucosamine N-acyltransferase (Phenylobacterium zucineum (strain HLK1)).